Consider the following 365-residue polypeptide: Uroporphyrinogen decarboxylase (365 aa).

Residues 27–31 (RQAGR), Asp-77, Tyr-154, Ser-209, and His-327 contribute to the substrate site.

It belongs to the uroporphyrinogen decarboxylase family. In terms of assembly, homodimer.

It is found in the cytoplasm. It catalyses the reaction uroporphyrinogen III + 4 H(+) = coproporphyrinogen III + 4 CO2. It participates in porphyrin-containing compound metabolism; protoporphyrin-IX biosynthesis; coproporphyrinogen-III from 5-aminolevulinate: step 4/4. Catalyzes the decarboxylation of four acetate groups of uroporphyrinogen-III to yield coproporphyrinogen-III. This is Uroporphyrinogen decarboxylase from Alkalilimnicola ehrlichii (strain ATCC BAA-1101 / DSM 17681 / MLHE-1).